We begin with the raw amino-acid sequence, 369 residues long: Anhydro-N-acetylmuramic acid kinase (369 aa).

12-19 contributes to the ATP binding site; sequence GTSLDGVD.

It belongs to the anhydro-N-acetylmuramic acid kinase family.

It catalyses the reaction 1,6-anhydro-N-acetyl-beta-muramate + ATP + H2O = N-acetyl-D-muramate 6-phosphate + ADP + H(+). It functions in the pathway amino-sugar metabolism; 1,6-anhydro-N-acetylmuramate degradation. Its pathway is cell wall biogenesis; peptidoglycan recycling. Catalyzes the specific phosphorylation of 1,6-anhydro-N-acetylmuramic acid (anhMurNAc) with the simultaneous cleavage of the 1,6-anhydro ring, generating MurNAc-6-P. Is required for the utilization of anhMurNAc either imported from the medium or derived from its own cell wall murein, and thus plays a role in cell wall recycling. The chain is Anhydro-N-acetylmuramic acid kinase from Escherichia coli O45:K1 (strain S88 / ExPEC).